The following is a 411-amino-acid chain: E3 ubiquitin-protein ligase PUB23 (411 aa).

In terms of domain architecture, U-box spans 11-86 (EIPPFFLCPI…QSWCTLNASY (76 aa)). 4 ARM repeats span residues 132 to 173 (ATNK…HLET), 175 to 203 (ETVL…RGMY), 221 to 261 (DPMQ…NICP), and 263 to 306 (GRNR…LLCQ).

Interacts with RPN12A. Auto-ubiquitinated.

The protein resides in the cytoplasm. The catalysed reaction is S-ubiquitinyl-[E2 ubiquitin-conjugating enzyme]-L-cysteine + [acceptor protein]-L-lysine = [E2 ubiquitin-conjugating enzyme]-L-cysteine + N(6)-ubiquitinyl-[acceptor protein]-L-lysine.. It participates in protein modification; protein ubiquitination. E3 ubiquitin-protein ligase that negatively regulates water stress response. May control in coordination with PUB23 a drought signaling pathway by ubiquitinating cytosolic RPN12a. Acts as a negative regulator of the immunity triggered by the pathogen-associated molecular patterns (PAMPs), in association with PUB22 and PUB24. The polypeptide is E3 ubiquitin-protein ligase PUB23 (PUB23) (Arabidopsis thaliana (Mouse-ear cress)).